The primary structure comprises 323 residues: Ubiquinone biosynthesis protein COQ4, mitochondrial (323 aa).

H205, D206, H209, and E221 together coordinate Zn(2+).

This sequence belongs to the COQ4 family. In terms of assembly, component of a multi-subunit COQ enzyme complex, composed of at least COQ3, COQ4, COQ5, COQ6, COQ7 and COQ9. Requires Zn(2+) as cofactor.

The protein resides in the mitochondrion inner membrane. The catalysed reaction is a 4-hydroxy-3-methoxy-5-(all-trans-polyprenyl)benzoate + H(+) = a 2-methoxy-6-(all-trans-polyprenyl)phenol + CO2. The protein operates within cofactor biosynthesis; ubiquinone biosynthesis. Functionally, lyase that catalyzes the C1-decarboxylation of 4-hydroxy-3-methoxy-5-(all-trans-polyprenyl)benzoic acid into 2-methoxy-6-(all-trans-polyprenyl)phenol during ubiquinone biosynthesis. The polypeptide is Ubiquinone biosynthesis protein COQ4, mitochondrial (Candida albicans (strain SC5314 / ATCC MYA-2876) (Yeast)).